The chain runs to 456 residues: Equilibrative nucleoside transporter 2 (456 aa).

Over 1-12 (MAHGNAPRDSYH) the chain is Cytoplasmic. A helical transmembrane segment spans residues 13–29 (LVGISFFILGLGTLLPW). Residues 30–68 (NFFITAIPYFQGRLAGTNSSAETPSTNHTSPTDTFNFNN) lie on the Extracellular side of the membrane. Residues Asn-47 and Asn-56 are each glycosylated (N-linked (GlcNAc...) asparagine). Residues 69 to 93 (WVTLLSQLPLLLFTLLNSFLYQCIP) traverse the membrane as a helical segment. The Cytoplasmic portion of the chain corresponds to 94 to 97 (ESVR). Residues 98-116 (ILGSLLAILLLFALTAALV) form a helical membrane-spanning segment. Over 117–124 (KVDLSPGL) the chain is Extracellular. A helical membrane pass occupies residues 125 to 143 (FFSITMASVWFINSFCAVL). The Cytoplasmic segment spans residues 144 to 160 (QGSLFGQLGTMPSTYST). A helical membrane pass occupies residues 161 to 185 (LFLSGQGLAGIFAALAMLTSLASGV). Residues 186-192 (DPQTSAL) are Extracellular-facing. Residues 193-213 (GYFITPCVGILLSIICYLSLP) traverse the membrane as a helical segment. Residues 214–291 (HLKFARYYLT…VFVVFRKIWL (78 aa)) are Cytoplasmic-facing. Ser-251 is subject to Phosphoserine. Residues 292–311 (TALCLVLVFTVTLSVFPAIT) form a helical membrane-spanning segment. The Extracellular portion of the chain corresponds to 312–323 (AMVTTSSNSPGK). Residues 324 to 342 (WSQFFNPICCFLLFNVMDW) form a helical membrane-spanning segment. Over 343–359 (LGRSLTSYFLWPDEDSQ) the chain is Cytoplasmic. A helical membrane pass occupies residues 360–378 (LLPLLVCLRFLFVPLFMLC). Residues 379-393 (HVPQRARLPIIFWQD) lie on the Extracellular side of the membrane. Residues 394 to 413 (AYFITFMLLFAISNGYFVSL) traverse the membrane as a helical segment. Topologically, residues 414–431 (TMCLAPRQVLPHEREVAG) are cytoplasmic. Residues 432-452 (ALMTFFLALGLSCGASLSFLF) traverse the membrane as a helical segment. Residues 453–456 (KALL) lie on the Extracellular side of the membrane.

The protein belongs to the SLC29A/ENT transporter (TC 2.A.57) family. As to expression, expressed in squeletal muscles. Expressed in testis at the blood-brain-barrier.

It is found in the apical cell membrane. The protein localises to the basolateral cell membrane. The enzyme catalyses uridine(out) = uridine(in). The catalysed reaction is inosine(in) = inosine(out). It catalyses the reaction adenosine(in) = adenosine(out). It carries out the reaction thymidine(in) = thymidine(out). The enzyme catalyses hypoxanthine(out) = hypoxanthine(in). The catalysed reaction is adenine(out) = adenine(in). It catalyses the reaction cytidine(in) = cytidine(out). It carries out the reaction thymine(out) = thymine(in). The enzyme catalyses uracil(in) = uracil(out). The catalysed reaction is guanine(out) = guanine(in). It catalyses the reaction guanosine(in) = guanosine(out). Functionally, bidirectional uniporter involved in the facilitative transport of nucleosides and nucleobases, and contributes to maintaining their cellular homeostasis. Functions as a Na(+)-independent, passive transporter. Involved in the transport of nucleosides such as inosine, adenosine, uridine, thymidine, cytidine and guanosine. Also able to transport purine nucleobases (hypoxanthine, adenine, guanine) and pyrimidine nucleobases (thymine, uracil). Involved in nucleoside transport at basolateral membrane of kidney cells, allowing liver absorption of nucleoside metabolites. Mediates apical nucleoside uptake into Sertoli cells, thereby regulating the transport of nucleosides in testis across the blood-testis-barrier. Mediates both the influx and efflux of hypoxanthine in skeletal muscle microvascular endothelial cells to control the amount of intracellular hypoxanthine available for xanthine oxidase-mediated ROS production. This Rattus norvegicus (Rat) protein is Equilibrative nucleoside transporter 2.